The primary structure comprises 309 residues: Methionyl-tRNA formyltransferase (309 aa).

Residue 107-110 coordinates (6S)-5,6,7,8-tetrahydrofolate; it reads SLLP.

The protein belongs to the Fmt family.

It catalyses the reaction L-methionyl-tRNA(fMet) + (6R)-10-formyltetrahydrofolate = N-formyl-L-methionyl-tRNA(fMet) + (6S)-5,6,7,8-tetrahydrofolate + H(+). In terms of biological role, attaches a formyl group to the free amino group of methionyl-tRNA(fMet). The formyl group appears to play a dual role in the initiator identity of N-formylmethionyl-tRNA by promoting its recognition by IF2 and preventing the misappropriation of this tRNA by the elongation apparatus. The protein is Methionyl-tRNA formyltransferase of Borrelia recurrentis (strain A1).